We begin with the raw amino-acid sequence, 383 residues long: Processive diacylglycerol beta-glucosyltransferase (383 aa).

This sequence belongs to the glycosyltransferase 28 family. UgtP subfamily.

The protein localises to the cell membrane. It carries out the reaction a 1,2-diacyl-3-O-(beta-D-glucopyranosyl)-sn-glycerol + UDP-alpha-D-glucose = a 1,2-diacyl-3-O-(beta-D-Glc-(1-&gt;6)-beta-D-Glc)-sn-glycerol + UDP + H(+). The enzyme catalyses a 1,2-diacyl-3-O-(beta-D-Glc-(1-&gt;6)-beta-D-Glc)-sn-glycerol + UDP-alpha-D-glucose = a 1,2-diacyl-3-O-(beta-D-Glc-(1-&gt;6)-beta-D-Glc-(1-&gt;6)-beta-D-Glc)-sn-glycerol + UDP + H(+). The catalysed reaction is a 1,2-diacyl-sn-glycerol + UDP-alpha-D-glucose = a 1,2-diacyl-3-O-(beta-D-glucopyranosyl)-sn-glycerol + UDP + H(+). Its pathway is glycolipid metabolism; diglucosyl-diacylglycerol biosynthesis. Its function is as follows. Processive glucosyltransferase involved in the biosynthesis of both the bilayer- and non-bilayer-forming membrane glucolipids. Is able to successively transfer up to three glucosyl residues to diacylglycerol (DAG), thereby catalyzing the formation of beta-monoglucosyl-DAG (3-O-(beta-D-glucopyranosyl)-1,2-diacyl-sn-glycerol), beta-diglucosyl-DAG (3-O-(beta-D-glucopyranosyl-beta-(1-&gt;6)-D-glucopyranosyl)-1,2-diacyl-sn-glycerol) and beta-triglucosyl-DAG (3-O-(beta-D-glucopyranosyl-beta-(1-&gt;6)-D-glucopyranosyl-beta-(1-&gt;6)-D-glucopyranosyl)-1,2-diacyl-sn-glycerol). Beta-diglucosyl-DAG is the predominant glycolipid found in Bacillales and is also used as a membrane anchor for lipoteichoic acid (LTA). The sequence is that of Processive diacylglycerol beta-glucosyltransferase from Bacillus licheniformis (strain ATCC 14580 / DSM 13 / JCM 2505 / CCUG 7422 / NBRC 12200 / NCIMB 9375 / NCTC 10341 / NRRL NRS-1264 / Gibson 46).